The following is a 96-amino-acid chain: Keratin-associated protein 12-3 (96 aa).

Tandem repeats lie at residues 10–14 (CQPTC), 15–19 (CIHSP), 24–28 (CYVPV), 30–34 (CQSSV), 35–39 (CMPVS), 45–49 (CVAPS), 50–54 (CQPSV), 55–59 (CVPVS), 60–64 (CRPII), 70–74 (CQSSG), 75–79 (CCQPP), 80–84 (CTTAL), 85–89 (CRPIS), and 90–94 (CSTPS). Positions 10-94 (CQPTCCIHSP…CRPISCSTPS (85 aa)) are 14 X 5 AA approximate repeats.

It belongs to the KRTAP type 12 family. Interacts with hair keratins. In terms of tissue distribution, restricted to a narrow region of the hair fiber cuticle, lying approximately 20 cell layers above the apex of the dermal papilla of the hair root; not detected in any other tissues.

Functionally, in the hair cortex, hair keratin intermediate filaments are embedded in an interfilamentous matrix, consisting of hair keratin-associated proteins (KRTAP), which are essential for the formation of a rigid and resistant hair shaft through their extensive disulfide bond cross-linking with abundant cysteine residues of hair keratins. The matrix proteins include the high-sulfur and high-glycine-tyrosine keratins. This Homo sapiens (Human) protein is Keratin-associated protein 12-3 (KRTAP12-3).